The primary structure comprises 270 residues: Large ribosomal subunit protein uL10 (270 aa).

The segment at 234–270 (VTELEAGKTRPKREGNRRQAMNGDEMDEDQSSDEDSD) is disordered. Positions 238-250 (EAGKTRPKREGNR) are enriched in basic and acidic residues. Residues 257–270 (DEMDEDQSSDEDSD) show a composition bias toward acidic residues.

This sequence belongs to the universal ribosomal protein uL10 family. Associates with the pre-60S ribosomal particle.

It is found in the nucleus. It localises to the nucleolus. The protein resides in the cytoplasm. Functionally, component of the ribosome assembly machinery. Nuclear paralog of the ribosomal protein P0, it binds pre-60S subunits at an early stage of assembly in the nucleolus, and is replaced by P0 in cytoplasmic pre-60S subunits and mature 80S ribosomes. The protein is Large ribosomal subunit protein uL10 of Chaetomium thermophilum (strain DSM 1495 / CBS 144.50 / IMI 039719) (Thermochaetoides thermophila).